The following is a 49-amino-acid chain: Disintegrin echistatin-gamma (49 aa).

The Disintegrin domain occupies 1–47; the sequence is DCASGPCCRDCKFLEEGTICNMARGDDMDDYCNGKTCDCPRNPHKWP. Disulfide bonds link cysteine 2–cysteine 11, cysteine 7–cysteine 32, cysteine 8–cysteine 37, and cysteine 20–cysteine 39. Positions 24-26 match the Cell attachment site motif; sequence RGD.

This sequence belongs to the venom metalloproteinase (M12B) family. P-II subfamily. P-IIa sub-subfamily. As to quaternary structure, monomer. Expressed by the venom gland.

It is found in the secreted. Its function is as follows. Has antiplatelet activities on guinea pig, followed by human, rabbit and rat platelet-rich plasma. The protein is Disintegrin echistatin-gamma of Echis pyramidum leakeyi (Leakey's carpet viper).